The sequence spans 71 residues: Large ribosomal subunit protein bL31 (71 aa).

Positions 16, 18, 36, and 39 each coordinate Zn(2+).

This sequence belongs to the bacterial ribosomal protein bL31 family. Type A subfamily. As to quaternary structure, part of the 50S ribosomal subunit. Zn(2+) is required as a cofactor.

Binds the 23S rRNA. The chain is Large ribosomal subunit protein bL31 from Thermotoga sp. (strain RQ2).